The sequence spans 209 residues: Type III pantothenate kinase (209 aa).

Position 5 to 12 (5 to 12 (DIGNSNAN)) interacts with ATP. Residues Tyr-68 and 72–75 (GIDR) each bind substrate. Catalysis depends on Asp-74, which acts as the Proton acceptor. Asp-89 is a binding site for K(+). An ATP-binding site is contributed by Ser-92. Residue Thr-144 participates in substrate binding.

This sequence belongs to the type III pantothenate kinase family. Homodimer. Requires NH4(+) as cofactor. The cofactor is K(+).

The protein localises to the cytoplasm. The enzyme catalyses (R)-pantothenate + ATP = (R)-4'-phosphopantothenate + ADP + H(+). It participates in cofactor biosynthesis; coenzyme A biosynthesis; CoA from (R)-pantothenate: step 1/5. In terms of biological role, catalyzes the phosphorylation of pantothenate (Pan), the first step in CoA biosynthesis. The chain is Type III pantothenate kinase from Campylobacter jejuni subsp. jejuni serotype O:2 (strain ATCC 700819 / NCTC 11168).